The sequence spans 375 residues: MGNHRSDLKATRRWVVKVGSALLTANGRGLDTGCIQELASHIARLRNKGYTIVLVSSGSVAAGMERLGWRRRPRALYELQAAAAVGQMGLIQAYESEFQHHNQHTAQILLTHEDLANRSRYLNARSTLRTLLRLGVVPIVNENDTVATEEIRFGDNDTLSALVANLVEAELLVILTDQEGLFDADPRHYPNASFISEAAANKTELDGMANSRAGALGRGGMITKIRAARRAARSGAITVIASGKEPKILQRIASGETVGTLLWPDRQPLAARKQWLAGQLQTKGRLWLDTGAVKVVREAGRSLLPIGVLACEGNFARGEVVSCLDSDAREIACGLVNYNAEETRRILGHSSHQIEQILGYVDEEELIHRDNLVLL.

Lys-17 contacts ATP. 3 residues coordinate substrate: Ser-57, Asp-144, and Asn-156. 176–177 (TD) is an ATP binding site. The PUA domain occupies 283–361 (KGRLWLDTGA…HQIEQILGYV (79 aa)).

This sequence belongs to the glutamate 5-kinase family.

The protein localises to the cytoplasm. The catalysed reaction is L-glutamate + ATP = L-glutamyl 5-phosphate + ADP. It participates in amino-acid biosynthesis; L-proline biosynthesis; L-glutamate 5-semialdehyde from L-glutamate: step 1/2. Functionally, catalyzes the transfer of a phosphate group to glutamate to form L-glutamate 5-phosphate. The chain is Glutamate 5-kinase from Nitrosococcus oceani (strain ATCC 19707 / BCRC 17464 / JCM 30415 / NCIMB 11848 / C-107).